The following is a 504-amino-acid chain: UDP-N-acetylmuramoylalanine--D-glutamate ligase (504 aa).

132–138 (GTNGKTT) is an ATP binding site. Positions 286–295 (DRDASDEPAP) are enriched in basic and acidic residues. The disordered stretch occupies residues 286–305 (DRDASDEPAPKRRRKNEVAT).

Belongs to the MurCDEF family.

It localises to the cytoplasm. It catalyses the reaction UDP-N-acetyl-alpha-D-muramoyl-L-alanine + D-glutamate + ATP = UDP-N-acetyl-alpha-D-muramoyl-L-alanyl-D-glutamate + ADP + phosphate + H(+). It participates in cell wall biogenesis; peptidoglycan biosynthesis. Cell wall formation. Catalyzes the addition of glutamate to the nucleotide precursor UDP-N-acetylmuramoyl-L-alanine (UMA). This chain is UDP-N-acetylmuramoylalanine--D-glutamate ligase, found in Paraburkholderia xenovorans (strain LB400).